Reading from the N-terminus, the 640-residue chain is Fructose-1,6-bisphosphatase class 3 (640 aa).

Belongs to the FBPase class 3 family. Mn(2+) is required as a cofactor.

The catalysed reaction is beta-D-fructose 1,6-bisphosphate + H2O = beta-D-fructose 6-phosphate + phosphate. The protein operates within carbohydrate biosynthesis; gluconeogenesis. This is Fructose-1,6-bisphosphatase class 3 from Lactococcus lactis subsp. lactis (strain IL1403) (Streptococcus lactis).